Consider the following 308-residue polypeptide: HTH-type transcriptional activator AllS (308 aa).

The HTH lysR-type domain maps to 2 to 59; the sequence is FDPETLRTFIAVAETGSFSKAAERLCKTTATISYRIKLLEENTGVALFFRTTRSVTLT. Positions 19-38 form a DNA-binding region, H-T-H motif; that stretch reads FSKAAERLCKTTATISYRIK.

The protein belongs to the LysR transcriptional regulatory family.

In terms of biological role, positive regulator essential for the expression of AllD operon. Binds to the AllD promoter. This is HTH-type transcriptional activator AllS (allS) from Escherichia coli O157:H7.